The chain runs to 309 residues: uncharacterized protein (309 aa).

A helical transmembrane segment spans residues 23 to 39 (RFNVAIIGGTGGLGRAI).

Belongs to the NmrA-type oxidoreductase family.

Its subcellular location is the membrane. This is an uncharacterized protein from Saccharomyces cerevisiae (strain ATCC 204508 / S288c) (Baker's yeast).